Here is a 164-residue protein sequence, read N- to C-terminus: Low molecular weight phosphotyrosine protein phosphatase 2 (164 aa).

The Nucleophile role is filled by Cys-14. Residue Arg-20 is part of the active site. Asp-130 serves as the catalytic Proton donor.

Belongs to the low molecular weight phosphotyrosine protein phosphatase family. Cone cells and primary pigment cells in developing pupal retina.

Its subcellular location is the cytoplasm. It catalyses the reaction O-phospho-L-tyrosyl-[protein] + H2O = L-tyrosyl-[protein] + phosphate. It carries out the reaction a phosphate monoester + H2O = an alcohol + phosphate. Functionally, catalyzes the dephosphorylation of tyrosine phosphorylated proteins and low-MW aryl phosphates. Can contribute to the regulation of a variety of developmental processes. This chain is Low molecular weight phosphotyrosine protein phosphatase 2 (primo-2), found in Drosophila melanogaster (Fruit fly).